A 447-amino-acid chain; its full sequence is UDP-N-acetylmuramoylalanine--D-glutamate ligase (447 aa).

Residue 112-118 (GTNGKST) coordinates ATP.

This sequence belongs to the MurCDEF family.

It localises to the cytoplasm. The catalysed reaction is UDP-N-acetyl-alpha-D-muramoyl-L-alanine + D-glutamate + ATP = UDP-N-acetyl-alpha-D-muramoyl-L-alanyl-D-glutamate + ADP + phosphate + H(+). Its pathway is cell wall biogenesis; peptidoglycan biosynthesis. Functionally, cell wall formation. Catalyzes the addition of glutamate to the nucleotide precursor UDP-N-acetylmuramoyl-L-alanine (UMA). The chain is UDP-N-acetylmuramoylalanine--D-glutamate ligase from Legionella pneumophila subsp. pneumophila (strain Philadelphia 1 / ATCC 33152 / DSM 7513).